The primary structure comprises 482 residues: G2/mitotic-specific cyclin cdc13 (482 aa).

3 stretches are compositionally biased toward polar residues: residues 35–55 (LHSSENSLVNGKKATVSSTNV), 78–92 (SKNTNVRHTTASVST), and 118–140 (SVFNSSVPSLPQHLSTKSHSVST). Residues 35–140 (LHSSENSLVN…LSTKSHSVST (106 aa)) form a disordered region. The Cyclin N-terminal domain maps to 206–332 (DIFEYLNELE…ILRVLEFNLA (127 aa)).

Belongs to the cyclin family. Cyclin AB subfamily. In terms of assembly, interacts with cdc2. Interacts with rum1. Associates with microtubules. Also interacts with cdc11.

The protein resides in the nucleus. Its subcellular location is the cytoplasm. It localises to the cytoskeleton. The protein localises to the microtubule organizing center. It is found in the spindle pole body. Its function is as follows. Essential for the control of the cell cycle at the G2/M (mitosis) transition. Interacts with the cdc2 protein kinase to form MPF. G2/M cyclins accumulate steadily during G2 and are abruptly destroyed at mitosis. Involved in the reorganization of the cytoskeleton on transition from G2 to mitosis. Association with rum1 promotes its proteolysis during G1. Also essential for initiation of meiosis II. This Schizosaccharomyces pombe (strain 972 / ATCC 24843) (Fission yeast) protein is G2/mitotic-specific cyclin cdc13.